A 101-amino-acid chain; its full sequence is Protein S100-A4 (101 aa).

Ala2 carries the N-acetylalanine modification. 2 consecutive EF-hand domains span residues 12–47 and 50–85; these read IVST…SFLG and TDEA…IAMM. 2 residues coordinate Ca(2+): Lys28 and Glu33. An N6-acetyllysine modification is found at Lys35. Positions 63, 65, 67, 69, and 74 each coordinate Ca(2+).

This sequence belongs to the S-100 family. In terms of assembly, homodimer. Interacts with PPFIBP1 in a calcium-dependent mode. Interacts with PGLYRP1; this complex acts as a chemoattractant that promotes lymphocyte movement. Interacts with MYH9; this interaction increases cell motility. Interacts with Annexin 2/ANXA2. Interacts with TP53; this interaction promotes TP53 degradation. Interacts with CCR5 and CXCR3. Interacts with FCGR3A; this interaction inhibits PKC-dependent phosphorylation of FCGR3A.

The protein resides in the secreted. It is found in the nucleus. Its subcellular location is the cytoplasm. Functionally, calcium-binding protein that plays a role in various cellular processes including motility, angiogenesis, cell differentiation, apoptosis, and autophagy. Increases cell motility and invasiveness by interacting with non-muscle myosin heavy chain (NMMHC) IIA/MYH9. Mechanistically, promotes filament depolymerization and increases the amount of soluble myosin-IIA, resulting in the formation of stable protrusions facilitating chemotaxis. Also modulates the pro-apoptotic function of TP53 by binding to its C-terminal transactivation domain within the nucleus and reducing its protein levels. Within the extracellular space, stimulates cytokine production including granulocyte colony-stimulating factor and CCL24 from T-lymphocytes. In addition, stimulates T-lymphocyte chemotaxis by acting as a chemoattractant complex with PGLYRP1 that promotes lymphocyte migration via CCR5 and CXCR3 receptors. This Rattus norvegicus (Rat) protein is Protein S100-A4 (S100a4).